The following is a 160-amino-acid chain: SsrA-binding protein (160 aa).

The protein belongs to the SmpB family.

Its subcellular location is the cytoplasm. In terms of biological role, required for rescue of stalled ribosomes mediated by trans-translation. Binds to transfer-messenger RNA (tmRNA), required for stable association of tmRNA with ribosomes. tmRNA and SmpB together mimic tRNA shape, replacing the anticodon stem-loop with SmpB. tmRNA is encoded by the ssrA gene; the 2 termini fold to resemble tRNA(Ala) and it encodes a 'tag peptide', a short internal open reading frame. During trans-translation Ala-aminoacylated tmRNA acts like a tRNA, entering the A-site of stalled ribosomes, displacing the stalled mRNA. The ribosome then switches to translate the ORF on the tmRNA; the nascent peptide is terminated with the 'tag peptide' encoded by the tmRNA and targeted for degradation. The ribosome is freed to recommence translation, which seems to be the essential function of trans-translation. The chain is SsrA-binding protein from Escherichia coli O139:H28 (strain E24377A / ETEC).